Reading from the N-terminus, the 291-residue chain is ATP synthase gamma chain (291 aa).

Belongs to the ATPase gamma chain family. F-type ATPases have 2 components, CF(1) - the catalytic core - and CF(0) - the membrane proton channel. CF(1) has five subunits: alpha(3), beta(3), gamma(1), delta(1), epsilon(1). CF(0) has three main subunits: a, b and c.

It is found in the cell inner membrane. In terms of biological role, produces ATP from ADP in the presence of a proton gradient across the membrane. The gamma chain is believed to be important in regulating ATPase activity and the flow of protons through the CF(0) complex. The chain is ATP synthase gamma chain from Burkholderia ambifaria (strain MC40-6).